The following is a 393-amino-acid chain: Staphopain B (393 aa).

A signal peptide spans 1-36; it reads MNSSYKSRVFNIISIIMVSMLILSLGAFANNNKAKA. Residues 37 to 219 constitute a propeptide that is removed on maturation; the sequence is DSHSKQLEIN…KVEENEAIQE (183 aa). Residues C243, H340, and N360 contribute to the active site.

Belongs to the peptidase C47 family. As to quaternary structure, in the cytoplasm, prematurely activated/folded SspB forms a stable non-covalent complex with SspC. Post-translationally, proteolytically cleaved by staphylococcal serine protease (SspA).

The protein resides in the secreted. With respect to regulation, prematurely activated/folded staphopain B is inhibited by staphostatin B (SspC), which is probably required to protect staphylococcal cytoplasmic proteins from degradation by SspB. In terms of biological role, cysteine protease that plays an important role in the inhibition of host innate immune response. Degrades host elastin, fibrogen, fibronectin and kininogen. Blocks phagocytosis of opsonised S.aureus by neutrophils and monocytes by inducing their death in a proteolytic activity-dependent manner. Decreases surface expression of the 'don't eat me' signal CD31 on neutrophils. Cleaves host galectin-3/LGALS3, thereby inhibiting the neutrophil-activating ability of the lectin. This is Staphopain B (sspB) from Staphylococcus aureus (strain MSSA476).